The chain runs to 132 residues: Chemokine-like protein TAFA-5 (132 aa).

An N-terminal signal peptide occupies residues 1 to 43; it reads MAPSPRTSSRQDATALPSMSSTFWAFMILASLLIAYCSQLAAG. A glycan (N-linked (GlcNAc...) asparagine) is linked at Asn113.

This sequence belongs to the TAFA family. As to expression, expressed in the subcutaneous, brown, epididymal and perirenal adipose tissue (at protein level).

It is found in the secreted. In terms of biological role, acts as a chemokine-like protein by regulating cell proliferation and migration through activation of G protein-coupled receptors (GPCRs), such as S1PR2 and FPR2. Stimulates chemotactic migration of macrophages mediated by the MAPK3/ERK1 and AKT1 pathway. Blocks TNFSF11/RANKL-induced osteoclast formation from macrophages by inhibiting up-regulation of osteoclast fusogenic and differentiation genes. Stimulation of macrophage migration and inhibition of osteoclast formation is mediated through the GPCR FPR2. Acts as an adipokine by negatively regulating vascular smooth muscle cell (VSMC) proliferation and migration in response to platelet-derived growth factor stimulation via GPCR S1PR2 and G protein GNA12/GNA13-transmitted RHOA signaling. Inhibits injury-induced cell proliferation and neointima formation in the femoral arteries. The protein is Chemokine-like protein TAFA-5 (Tafa5) of Mus musculus (Mouse).